Consider the following 208-residue polypeptide: Uracil phosphoribosyltransferase (208 aa).

Residues arginine 78, arginine 103, and 130–138 each bind 5-phospho-alpha-D-ribose 1-diphosphate; that span reads DPMLATGGS. Uracil contacts are provided by residues isoleucine 193 and 198-200; that span reads GDA. Position 199 (aspartate 199) interacts with 5-phospho-alpha-D-ribose 1-diphosphate.

Belongs to the UPRTase family. It depends on Mg(2+) as a cofactor.

It carries out the reaction UMP + diphosphate = 5-phospho-alpha-D-ribose 1-diphosphate + uracil. It participates in pyrimidine metabolism; UMP biosynthesis via salvage pathway; UMP from uracil: step 1/1. Its activity is regulated as follows. Allosterically activated by GTP. Functionally, catalyzes the conversion of uracil and 5-phospho-alpha-D-ribose 1-diphosphate (PRPP) to UMP and diphosphate. The polypeptide is Uracil phosphoribosyltransferase (Proteus mirabilis (strain HI4320)).